Reading from the N-terminus, the 179-residue chain is Large ribosomal subunit protein uL6 (179 aa).

The protein belongs to the universal ribosomal protein uL6 family. In terms of assembly, part of the 50S ribosomal subunit.

Functionally, this protein binds to the 23S rRNA, and is important in its secondary structure. It is located near the subunit interface in the base of the L7/L12 stalk, and near the tRNA binding site of the peptidyltransferase center. This is Large ribosomal subunit protein uL6 from Synechococcus sp. (strain CC9311).